Consider the following 312-residue polypeptide: L-lactate dehydrogenase (312 aa).

Residues Val14, Asp35, and Tyr66 each coordinate NAD(+). Substrate contacts are provided by residues Gln83, Arg90, and Asn122–Asp125. NAD(+) contacts are provided by residues Ala120–Asn122 and Ser145. Residue Asp150–Arg153 participates in substrate binding. Residue His177 is the Proton acceptor of the active site. Residue Tyr220 is modified to Phosphotyrosine. Thr229 contacts substrate.

The protein belongs to the LDH/MDH superfamily. LDH family. In terms of assembly, homotetramer.

The protein resides in the cytoplasm. It catalyses the reaction (S)-lactate + NAD(+) = pyruvate + NADH + H(+). It participates in fermentation; pyruvate fermentation to lactate; (S)-lactate from pyruvate: step 1/1. Functionally, catalyzes the conversion of lactate to pyruvate. The polypeptide is L-lactate dehydrogenase (Mycoplasma pneumoniae (strain ATCC 29342 / M129 / Subtype 1) (Mycoplasmoides pneumoniae)).